Here is an 87-residue protein sequence, read N- to C-terminus: Large ribosomal subunit protein bL31B (87 aa).

The protein belongs to the bacterial ribosomal protein bL31 family. Type B subfamily. In terms of assembly, part of the 50S ribosomal subunit.

This chain is Large ribosomal subunit protein bL31B, found in Corynebacterium kroppenstedtii (strain DSM 44385 / JCM 11950 / CIP 105744 / CCUG 35717).